A 440-amino-acid polypeptide reads, in one-letter code: KH domain-containing protein 3 (440 aa).

An involved in RNA binding region spans residues 1–39 (MASLKRFQTLVPLDHKQGTLFEIIGEPKLPKWFHVECLE). The KH; atypical domain maps to 40–118 (DPKRLYVEPR…CRMKLMEIEA (79 aa)). Residues 132–201 (KAATQPAPVK…EVREAATEQA (70 aa)) are disordered. Serine 151 is subject to Phosphoserine; by ATR. Threonine 274 and threonine 286 each carry phosphothreonine. The required for interaction with NUMA1 and regulation of apoptosis in response to DNA damage stretch occupies residues 341-440 (VREAATQLSP…RDAWESFIIL (100 aa)). At serine 349 the chain carries Phosphoserine.

This sequence belongs to the KHDC1 family. In terms of assembly, component of the subcortical maternal complex (SCMC), at least composed of NLRP5, KHDC3, OOEP, and TLE6. Within the complex, interacts with NLRP5, OOEP and TLE6. The SCMC may facilitate translocation of its components between the nuclear and cytoplasmic compartments. Forms a scaffold complex with OOEP/FLOPED, and interacts with BLM and TRIM25 at DNA replication forks. Interacts with PARP1; the interaction is increased following the formation of DNA double-strand breaks. Interacts (via C-terminus) with NUMA1. Post-translationally, phosphorylation at Ser-151 is required to promote stalled fork restart. As to expression, detected in ovary, but not in testis or somatic tissues. In the ovary, expressed in growing oocytes.

Its subcellular location is the cytoplasm. The protein resides in the cell cortex. The protein localises to the nucleus. It is found in the mitochondrion. It localises to the cytoskeleton. Its subcellular location is the microtubule organizing center. The protein resides in the centrosome. The protein localises to the chromosome. Functionally, component of the subcortical maternal complex (SCMC), a multiprotein complex that plays a key role in early embryonic development. The SCMC complex is a structural constituent of cytoplasmic lattices, which consist in fibrous structures found in the cytoplasm of oocytes and preimplantation embryos. They are required to store maternal proteins critical for embryonic development, such as proteins that control epigenetic reprogramming of the preimplantation embryo, and prevent their degradation or activation. KHDC3 ensures proper spindle assembly by regulating the localization of AURKA via RHOA signaling and of PLK1 via a RHOA-independent process. Required for the localization of MAD2L1 to kinetochores to enable spindle assembly checkpoint function. As part of the OOEP-KHDC3 scaffold, recruits BLM and TRIM25 to DNA replication forks, thereby promoting the ubiquitination of BLM by TRIM25, enhancing BLM retainment at replication forks and therefore promoting stalled replication fork restart. Regulates homologous recombination-mediated DNA repair via recruitment of RAD51 to sites of DNA double-strand breaks, and sustainment of PARP1 activity, which in turn modulates downstream ATM or ATR activation. Activation of ATM or ATR in response to DNA double-strand breaks may be cell-type specific. Its role in DNA double-strand break repair is independent of its role in restarting stalled replication forks. Promotes neural stem cell neurogenesis and neuronal differentiation in the hippocampus. May regulate normal development of learning, memory and anxiety. Capable of binding RNA. This Mus musculus (Mouse) protein is KH domain-containing protein 3.